Consider the following 437-residue polypeptide: Probable exopolygalacturonase C (437 aa).

An N-terminal signal peptide occupies residues 1 to 21; sequence MLITKTAFLAFLLSSVPLAHG. Residues N25, N42, N82, N99, and N149 are each glycosylated (N-linked (GlcNAc...) asparagine). PbH1 repeat units lie at residues 215-236 and 238-259; these read GTNIRISDSIMYNGDDAIAVGS and SHNIVFERNTIGYQSHGMSIGS. Catalysis depends on D229, which acts as the Proton donor. The active site involves H253. The N-linked (GlcNAc...) asparagine glycan is linked to N269. PbH1 repeat units lie at residues 270–291 and 299–320; these read ITNLRFEDVTVIDALYAARFKS and VKNVTWKNIRVYNVTFPIFVTQ. N-linked (GlcNAc...) asparagine glycosylation is found at N301 and N311. A disulfide bridge connects residues C386 and C392. N-linked (GlcNAc...) asparagine glycosylation is found at N428 and N431.

The protein belongs to the glycosyl hydrolase 28 family.

Its subcellular location is the secreted. The enzyme catalyses [(1-&gt;4)-alpha-D-galacturonosyl](n) + H2O = alpha-D-galacturonate + [(1-&gt;4)-alpha-D-galacturonosyl](n-1). Specific in hydrolyzing the terminal glycosidic bond of polygalacturonic acid and oligogalacturonates. The sequence is that of Probable exopolygalacturonase C (pgxC) from Aspergillus flavus (strain ATCC 200026 / FGSC A1120 / IAM 13836 / NRRL 3357 / JCM 12722 / SRRC 167).